The primary structure comprises 204 residues: Isochorismatase domain-containing protein 2 (204 aa).

This sequence belongs to the isochorismatase family. As to quaternary structure, interacts with CDKN2A.

It localises to the cytoplasm. Its subcellular location is the nucleus. This chain is Isochorismatase domain-containing protein 2 (ISOC2), found in Bos taurus (Bovine).